Here is a 79-residue protein sequence, read N- to C-terminus: RNA-binding protein Hfq (79 aa).

The 60-residue stretch at 10–69 (DPFLNALRKEHVPVSIYLVNGIKLQGNIESFDQYVVLLRNTVTQMVYKHAISTVVPARPV) folds into the Sm domain.

The protein belongs to the Hfq family. As to quaternary structure, homohexamer.

In terms of biological role, RNA chaperone that binds small regulatory RNA (sRNAs) and mRNAs to facilitate mRNA translational regulation in response to envelope stress, environmental stress and changes in metabolite concentrations. Also binds with high specificity to tRNAs. The protein is RNA-binding protein Hfq of Burkholderia mallei (strain ATCC 23344).